We begin with the raw amino-acid sequence, 480 residues long: Aspartyl/glutamyl-tRNA(Asn/Gln) amidotransferase subunit B (480 aa).

It belongs to the GatB/GatE family. GatB subfamily. As to quaternary structure, heterotrimer of A, B and C subunits.

The catalysed reaction is L-glutamyl-tRNA(Gln) + L-glutamine + ATP + H2O = L-glutaminyl-tRNA(Gln) + L-glutamate + ADP + phosphate + H(+). It catalyses the reaction L-aspartyl-tRNA(Asn) + L-glutamine + ATP + H2O = L-asparaginyl-tRNA(Asn) + L-glutamate + ADP + phosphate + 2 H(+). Allows the formation of correctly charged Asn-tRNA(Asn) or Gln-tRNA(Gln) through the transamidation of misacylated Asp-tRNA(Asn) or Glu-tRNA(Gln) in organisms which lack either or both of asparaginyl-tRNA or glutaminyl-tRNA synthetases. The reaction takes place in the presence of glutamine and ATP through an activated phospho-Asp-tRNA(Asn) or phospho-Glu-tRNA(Gln). This Streptococcus pneumoniae (strain P1031) protein is Aspartyl/glutamyl-tRNA(Asn/Gln) amidotransferase subunit B.